The sequence spans 90 residues: UPF0335 protein bsl7135 (90 aa).

This sequence belongs to the UPF0335 family.

This is UPF0335 protein bsl7135 from Bradyrhizobium diazoefficiens (strain JCM 10833 / BCRC 13528 / IAM 13628 / NBRC 14792 / USDA 110).